The sequence spans 505 residues: 2,3-bisphosphoglycerate-independent phosphoglycerate mutase (505 aa).

Positions 11 and 61 each coordinate Mn(2+). Ser61 (phosphoserine intermediate) is an active-site residue. Residues His122, 152 to 153 (RD), Arg184, Arg190, 258 to 261 (RPDR), and Lys331 each bind substrate. Positions 396, 400, 437, 438, and 455 each coordinate Mn(2+).

The protein belongs to the BPG-independent phosphoglycerate mutase family. As to quaternary structure, monomer. It depends on Mn(2+) as a cofactor.

The catalysed reaction is (2R)-2-phosphoglycerate = (2R)-3-phosphoglycerate. The protein operates within carbohydrate degradation; glycolysis; pyruvate from D-glyceraldehyde 3-phosphate: step 3/5. Its function is as follows. Catalyzes the interconversion of 2-phosphoglycerate and 3-phosphoglycerate. This Mesomycoplasma hyopneumoniae (strain J / ATCC 25934 / NCTC 10110) (Mycoplasma hyopneumoniae) protein is 2,3-bisphosphoglycerate-independent phosphoglycerate mutase.